We begin with the raw amino-acid sequence, 717 residues long: Epithelial splicing regulatory protein 2 (717 aa).

Positions 1–14 are enriched in pro residues; that stretch reads MTPPPPPPPPPGPD. Positions 1–23 are disordered; the sequence is MTPPPPPPPPPGPDPAVDSATDP. The residue at position 83 (Ser-83) is a Phosphoserine. 3 consecutive RRM domains span residues 247 to 343, 348 to 428, and 465 to 545; these read TVVR…RFLS, VILR…RSTA, and DCVR…PCST. Ser-563 carries the post-translational modification Phosphoserine.

It belongs to the ESRP family. In terms of assembly, interacts with RBPMS. In terms of tissue distribution, epithelial cell-specific.

Its subcellular location is the nucleus. MRNA splicing factor that regulates the formation of epithelial cell-specific isoforms. Specifically regulates the expression of FGFR2-IIIb, an epithelial cell-specific isoform of FGFR2. Also regulates the splicing of CD44, CTNND1, ENAH, 3 transcripts that undergo changes in splicing during the epithelial-to-mesenchymal transition (EMT). Acts by directly binding specific sequences in mRNAs. Binds the GU-rich sequence motifs in the ISE/ISS-3, a cis-element regulatory region present in the mRNA of FGFR2. The polypeptide is Epithelial splicing regulatory protein 2 (Esrp2) (Mus musculus (Mouse)).